Here is a 255-residue protein sequence, read N- to C-terminus: Probable UDP-N-acetylglucosamine pyrophosphorylase (255 aa).

The catalysed reaction is N-acetyl-alpha-D-glucosamine 1-phosphate + UTP + H(+) = UDP-N-acetyl-alpha-D-glucosamine + diphosphate. It functions in the pathway nucleotide-sugar biosynthesis; UDP-N-acetyl-alpha-D-glucosamine biosynthesis; UDP-N-acetyl-alpha-D-glucosamine from N-acetyl-alpha-D-glucosamine 1-phosphate: step 1/1. In Acanthamoeba polyphaga (Amoeba), this protein is Probable UDP-N-acetylglucosamine pyrophosphorylase.